The following is a 137-amino-acid chain: Golgin subfamily A member 7 (137 aa).

Residues Cys69 and Cys72 are each lipidated (S-palmitoyl cysteine).

Belongs to the ERF4 family. In terms of assembly, interacts with ZDHHC9.

It localises to the golgi apparatus membrane. Functionally, may be involved in protein transport from Golgi to cell surface. The ZDHHC9-GOLGA7 complex is a palmitoyltransferase specific for HRAS and NRAS. The protein is Golgin subfamily A member 7 (GOLGA7) of Gallus gallus (Chicken).